The primary structure comprises 153 residues: Neuromedin-S (153 aa).

The signal sequence occupies residues 1–26; it reads MKHLRPQFPLILAIYCFCMLQIPSSG. 3 consecutive propeptides follow at residues 27–69, 70–105, and 106–108; these read FPQP…IYKR, FLFH…ANRR, and MKR. Asn-141 bears the Asparagine amide mark. Positions 144–153 are excised as a propeptide; it reads NIEDEAQIQW.

It belongs to the NmU family.

The protein resides in the secreted. In terms of biological role, implicated in the regulation of circadian rhythms through autocrine and/or paracrine actions. The protein is Neuromedin-S (NMS) of Homo sapiens (Human).